The sequence spans 107 residues: Large ribosomal subunit protein uL23 (107 aa).

Belongs to the universal ribosomal protein uL23 family. In terms of assembly, part of the 50S ribosomal subunit. Contacts protein L29, and trigger factor when it is bound to the ribosome.

One of the early assembly proteins it binds 23S rRNA. One of the proteins that surrounds the polypeptide exit tunnel on the outside of the ribosome. Forms the main docking site for trigger factor binding to the ribosome. This chain is Large ribosomal subunit protein uL23, found in Rhodopirellula baltica (strain DSM 10527 / NCIMB 13988 / SH1).